Here is a 148-residue protein sequence, read N- to C-terminus: MSQKTSSCVREAVENIEDLQNAVEEDCPTGCHSKLLSVSHSLGDTVPFAIFTSKSTPLVAFGNVGELDNGPCFNTVFFRVERVHGSCATLSLLIAFDEHKHILDFTDKDTVCEVFRLEKTNYCIEVDLDCFCAINCLNPRLINRTHHH.

It to B.subtilis CotY. As to quaternary structure, disulfide cross-linked either to itself or to CotY.

It localises to the spore coat. The chain is Spore coat protein Z (cotZ) from Bacillus subtilis (strain 168).